The chain runs to 231 residues: MKSNYAVIVAAGKGKRMKMPINKQFICIQGKPILYYSISVFSKNPLVDKIVLVCAEDEIEYCKQEIVKKYNFDKVVKIVSGGKERQHSVFNALKVLENCSVVLIHDGARPFVTDRIIEDGIKYSNMYGACACGVVPKDTIKIKGKEGFSYKTLVRKELFIVQTPQCFDYNLIYDCHKKLANNKVQVTDDTTVAEYFGNMVYLYEGSYDNIKITTPEDLIIAENIFKTHKYI.

Belongs to the IspD/TarI cytidylyltransferase family. IspD subfamily.

It catalyses the reaction 2-C-methyl-D-erythritol 4-phosphate + CTP + H(+) = 4-CDP-2-C-methyl-D-erythritol + diphosphate. The protein operates within isoprenoid biosynthesis; isopentenyl diphosphate biosynthesis via DXP pathway; isopentenyl diphosphate from 1-deoxy-D-xylulose 5-phosphate: step 2/6. In terms of biological role, catalyzes the formation of 4-diphosphocytidyl-2-C-methyl-D-erythritol from CTP and 2-C-methyl-D-erythritol 4-phosphate (MEP). The polypeptide is 2-C-methyl-D-erythritol 4-phosphate cytidylyltransferase (Clostridium kluyveri (strain NBRC 12016)).